We begin with the raw amino-acid sequence, 377 residues long: Chaperone protein DnaJ (377 aa).

Positions 5-70 (DYYEVLGVGR…NKKAAYDQFG (66 aa)) constitute a J domain. A CR-type zinc finger spans residues 133–211 (GLTKELRIPT…CHGDGRVEKT (79 aa)). Cysteine 146, cysteine 149, cysteine 163, cysteine 166, cysteine 185, cysteine 188, cysteine 199, and cysteine 202 together coordinate Zn(2+). CXXCXGXG motif repeat units follow at residues 146–153 (CDVCDGSG), 163–170 (CGTCHGQG), 185–192 (CPTCHGRG), and 199–206 (CSKCHGDG).

Belongs to the DnaJ family. Homodimer. Zn(2+) serves as cofactor.

Its subcellular location is the cytoplasm. Participates actively in the response to hyperosmotic and heat shock by preventing the aggregation of stress-denatured proteins and by disaggregating proteins, also in an autonomous, DnaK-independent fashion. Unfolded proteins bind initially to DnaJ; upon interaction with the DnaJ-bound protein, DnaK hydrolyzes its bound ATP, resulting in the formation of a stable complex. GrpE releases ADP from DnaK; ATP binding to DnaK triggers the release of the substrate protein, thus completing the reaction cycle. Several rounds of ATP-dependent interactions between DnaJ, DnaK and GrpE are required for fully efficient folding. Also involved, together with DnaK and GrpE, in the DNA replication of plasmids through activation of initiation proteins. This Shewanella sp. (strain ANA-3) protein is Chaperone protein DnaJ.